The following is a 187-amino-acid chain: Holliday junction resolvase (187 aa).

Belongs to the RuvC family. Poxviruses-type subfamily. Mg(2+) serves as cofactor. In terms of processing, acylated by palmitic acid group(s).

Its subcellular location is the membrane. Functionally, nuclease that specifically cleaves and resolves four-way DNA Holliday junctions into linear duplex products. The protein is Holliday junction resolvase of Vaccinia virus (strain Ankara) (VACV).